The primary structure comprises 371 residues: S-adenosylmethionine:tRNA ribosyltransferase-isomerase (371 aa).

This sequence belongs to the QueA family. As to quaternary structure, monomer.

Its subcellular location is the cytoplasm. The catalysed reaction is 7-aminomethyl-7-carbaguanosine(34) in tRNA + S-adenosyl-L-methionine = epoxyqueuosine(34) in tRNA + adenine + L-methionine + 2 H(+). The protein operates within tRNA modification; tRNA-queuosine biosynthesis. In terms of biological role, transfers and isomerizes the ribose moiety from AdoMet to the 7-aminomethyl group of 7-deazaguanine (preQ1-tRNA) to give epoxyqueuosine (oQ-tRNA). In Nitratidesulfovibrio vulgaris (strain ATCC 29579 / DSM 644 / CCUG 34227 / NCIMB 8303 / VKM B-1760 / Hildenborough) (Desulfovibrio vulgaris), this protein is S-adenosylmethionine:tRNA ribosyltransferase-isomerase.